A 316-amino-acid chain; its full sequence is 4-hydroxy-3-methylbut-2-enyl diphosphate reductase (316 aa).

Cysteine 12 serves as a coordination point for [4Fe-4S] cluster. Histidine 41 and histidine 74 together coordinate (2E)-4-hydroxy-3-methylbut-2-enyl diphosphate. 2 residues coordinate dimethylallyl diphosphate: histidine 41 and histidine 74. The isopentenyl diphosphate site is built by histidine 41 and histidine 74. Cysteine 96 serves as a coordination point for [4Fe-4S] cluster. Histidine 124 contacts (2E)-4-hydroxy-3-methylbut-2-enyl diphosphate. Histidine 124 lines the dimethylallyl diphosphate pocket. Histidine 124 contributes to the isopentenyl diphosphate binding site. The active-site Proton donor is the glutamate 126. Residue threonine 167 coordinates (2E)-4-hydroxy-3-methylbut-2-enyl diphosphate. A [4Fe-4S] cluster-binding site is contributed by cysteine 197. (2E)-4-hydroxy-3-methylbut-2-enyl diphosphate is bound by residues serine 225, serine 226, asparagine 227, and serine 269. Dimethylallyl diphosphate is bound by residues serine 225, serine 226, asparagine 227, and serine 269. Residues serine 225, serine 226, asparagine 227, and serine 269 each contribute to the isopentenyl diphosphate site.

Belongs to the IspH family. As to quaternary structure, homodimer. [4Fe-4S] cluster serves as cofactor.

It catalyses the reaction isopentenyl diphosphate + 2 oxidized [2Fe-2S]-[ferredoxin] + H2O = (2E)-4-hydroxy-3-methylbut-2-enyl diphosphate + 2 reduced [2Fe-2S]-[ferredoxin] + 2 H(+). The enzyme catalyses dimethylallyl diphosphate + 2 oxidized [2Fe-2S]-[ferredoxin] + H2O = (2E)-4-hydroxy-3-methylbut-2-enyl diphosphate + 2 reduced [2Fe-2S]-[ferredoxin] + 2 H(+). Its pathway is isoprenoid biosynthesis; dimethylallyl diphosphate biosynthesis; dimethylallyl diphosphate from (2E)-4-hydroxy-3-methylbutenyl diphosphate: step 1/1. It participates in isoprenoid biosynthesis; isopentenyl diphosphate biosynthesis via DXP pathway; isopentenyl diphosphate from 1-deoxy-D-xylulose 5-phosphate: step 6/6. In terms of biological role, catalyzes the conversion of 1-hydroxy-2-methyl-2-(E)-butenyl 4-diphosphate (HMBPP) into a mixture of isopentenyl diphosphate (IPP) and dimethylallyl diphosphate (DMAPP). Acts in the terminal step of the DOXP/MEP pathway for isoprenoid precursor biosynthesis. The protein is 4-hydroxy-3-methylbut-2-enyl diphosphate reductase of Escherichia coli O6:H1 (strain CFT073 / ATCC 700928 / UPEC).